The chain runs to 392 residues: Selenide, water dikinase 1 (392 aa).

The residue at position 2 (S2) is an N-acetylserine. Residue C31 is part of the active site. ATP contacts are provided by residues K32, 67–69, D87, D110, and 161–164; these read GMD and GGQT. Residue D69 coordinates Mg(2+). Residue D110 coordinates Mg(2+). A Mg(2+)-binding site is contributed by D265.

This sequence belongs to the selenophosphate synthase 1 family. Class II subfamily. Homodimer. Heterodimer with isoform 3. In terms of assembly, homodimer. Heterodimer with isoform 4. As to quaternary structure, homodimer. Heterodimer with isoform 1. Homodimer. Heterodimer with isoform 2. Mg(2+) serves as cofactor. In terms of tissue distribution, gradually expressed during the cell cycle until G2/M phase and then decreases. As to expression, gradually expressed during the cell cycle until S phase and then decreases.

The protein localises to the cell membrane. Its subcellular location is the nucleus membrane. It localises to the cytoplasm. The catalysed reaction is hydrogenselenide + ATP + H2O = selenophosphate + AMP + phosphate + 2 H(+). With respect to regulation, activated by phosphate ions and by potassium ions. Its function is as follows. Synthesizes selenophosphate from selenide and ATP. The chain is Selenide, water dikinase 1 (SEPHS1) from Homo sapiens (Human).